The chain runs to 77 residues: uncharacterized protein (77 aa).

This is an uncharacterized protein from Bacillus licheniformis.